The sequence spans 358 residues: F-box protein At4g35733 (358 aa).

The F-box domain maps to 4 to 51 (ATVWSDLPGELLDHIANGLFSKVELLRFRSICKTFRSAVDSDKNFLDH).

Part of a SCF (ASK-cullin-F-box) protein ligase complex.

The protein operates within protein modification; protein ubiquitination. Functionally, component of SCF(ASK-cullin-F-box) E3 ubiquitin ligase complexes, which may mediate the ubiquitination and subsequent proteasomal degradation of target proteins. The chain is F-box protein At4g35733 from Arabidopsis thaliana (Mouse-ear cress).